Reading from the N-terminus, the 209-residue chain is Uracil phosphoribosyltransferase (209 aa).

5-phospho-alpha-D-ribose 1-diphosphate contacts are provided by residues arginine 79, arginine 104, and 131–139 (DPMLATGGS). Uracil contacts are provided by residues isoleucine 194 and 199 to 201 (GDA). Aspartate 200 is a 5-phospho-alpha-D-ribose 1-diphosphate binding site.

Belongs to the UPRTase family. It depends on Mg(2+) as a cofactor.

The catalysed reaction is UMP + diphosphate = 5-phospho-alpha-D-ribose 1-diphosphate + uracil. Its pathway is pyrimidine metabolism; UMP biosynthesis via salvage pathway; UMP from uracil: step 1/1. With respect to regulation, allosterically activated by GTP. Functionally, catalyzes the conversion of uracil and 5-phospho-alpha-D-ribose 1-diphosphate (PRPP) to UMP and diphosphate. The polypeptide is Uracil phosphoribosyltransferase (Finegoldia magna (strain ATCC 29328 / DSM 20472 / WAL 2508) (Peptostreptococcus magnus)).